A 213-amino-acid chain; its full sequence is Probable nicotinate-nucleotide adenylyltransferase (213 aa).

It belongs to the NadD family.

The catalysed reaction is nicotinate beta-D-ribonucleotide + ATP + H(+) = deamido-NAD(+) + diphosphate. Its pathway is cofactor biosynthesis; NAD(+) biosynthesis; deamido-NAD(+) from nicotinate D-ribonucleotide: step 1/1. In terms of biological role, catalyzes the reversible adenylation of nicotinate mononucleotide (NaMN) to nicotinic acid adenine dinucleotide (NaAD). The sequence is that of Probable nicotinate-nucleotide adenylyltransferase from Escherichia coli O45:K1 (strain S88 / ExPEC).